The primary structure comprises 549 residues: Probable protein kinase UbiB (549 aa).

Positions 123–501 (NFDDTPLASA…QQKAHKSNYL (379 aa)) constitute a Protein kinase domain. ATP is bound by residues 129-137 (LASASISQV) and K152. Catalysis depends on D287, which acts as the Proton acceptor. A run of 2 helical transmembrane segments spans residues 498–518 (SNYL…LFSQ) and 520–540 (ATLW…LLGW).

Belongs to the ABC1 family. UbiB subfamily.

The protein localises to the cell inner membrane. It functions in the pathway cofactor biosynthesis; ubiquinone biosynthesis [regulation]. Is probably a protein kinase regulator of UbiI activity which is involved in aerobic coenzyme Q (ubiquinone) biosynthesis. The protein is Probable protein kinase UbiB of Shewanella loihica (strain ATCC BAA-1088 / PV-4).